We begin with the raw amino-acid sequence, 586 residues long: UvrABC system protein C (586 aa).

The region spanning 17–94 is the GIY-YIG domain; it reads HKPGCYLWKD…IKQYKPRFNL (78 aa). Residues 201–236 enclose the UVR domain; sequence EQVLNHLQQQEIKASEQQNFEAARHFLDLQKAVLEL.

The protein belongs to the UvrC family. In terms of assembly, interacts with UvrB in an incision complex.

The protein localises to the cytoplasm. Functionally, the UvrABC repair system catalyzes the recognition and processing of DNA lesions. UvrC both incises the 5' and 3' sides of the lesion. The N-terminal half is responsible for the 3' incision and the C-terminal half is responsible for the 5' incision. The sequence is that of UvrABC system protein C from Mycoplasma pneumoniae (strain ATCC 29342 / M129 / Subtype 1) (Mycoplasmoides pneumoniae).